The primary structure comprises 555 residues: Probable terpene synthase 6 (555 aa).

Mg(2+)-binding residues include Asp309, Asp313, and Glu460. The short motif at 309 to 313 (DDTYD) is the DDXXD motif element.

Belongs to the terpene synthase family. It depends on Mg(2+) as a cofactor.

Its function is as follows. Probable sesquiterpene synthase. The protein is Probable terpene synthase 6 (TPS6) of Ricinus communis (Castor bean).